We begin with the raw amino-acid sequence, 142 residues long: Large ribosomal subunit protein uL11 (142 aa).

The protein belongs to the universal ribosomal protein uL11 family. In terms of assembly, part of the ribosomal stalk of the 50S ribosomal subunit. Interacts with L10 and the large rRNA to form the base of the stalk. L10 forms an elongated spine to which L12 dimers bind in a sequential fashion forming a multimeric L10(L12)X complex. Post-translationally, one or more lysine residues are methylated.

Forms part of the ribosomal stalk which helps the ribosome interact with GTP-bound translation factors. The sequence is that of Large ribosomal subunit protein uL11 from Baumannia cicadellinicola subsp. Homalodisca coagulata.